The sequence spans 207 residues: MARSKTSHRWLKEHFDDPYVKMAQKDGYRSRASYKLLEIQEKDRILRPGMTVVDLGAAPGGWSQVTSRLIGDRGRLIASDILPMDSIPDVTFIQGDFTDDAVFALLLEAIGEQPVDLVISDMAPNMSGVKAADQPRAMYLCELALDLAGRVLRPGGDFLIKIFQGEGFDQYLRQVREGFDKVQMRKPLSSRDRSREQYLLARGFRGA.

5 residues coordinate S-adenosyl-L-methionine: Gly-60, Trp-62, Asp-80, Asp-96, and Asp-121. Residue Lys-161 is the Proton acceptor of the active site.

It belongs to the class I-like SAM-binding methyltransferase superfamily. RNA methyltransferase RlmE family.

The protein resides in the cytoplasm. The catalysed reaction is uridine(2552) in 23S rRNA + S-adenosyl-L-methionine = 2'-O-methyluridine(2552) in 23S rRNA + S-adenosyl-L-homocysteine + H(+). Functionally, specifically methylates the uridine in position 2552 of 23S rRNA at the 2'-O position of the ribose in the fully assembled 50S ribosomal subunit. This chain is Ribosomal RNA large subunit methyltransferase E, found in Azotobacter vinelandii (strain DJ / ATCC BAA-1303).